The chain runs to 277 residues: Phosphate import ATP-binding protein PstB (277 aa).

Residues 31 to 272 (IEVPGLSLYY…PAKKQTEDYI (242 aa)) enclose the ABC transporter domain. 63-70 (GPSGCGKS) contributes to the ATP binding site.

The protein belongs to the ABC transporter superfamily. Phosphate importer (TC 3.A.1.7) family. The complex is composed of two ATP-binding proteins (PstB), two transmembrane proteins (PstC and PstA) and a solute-binding protein (PstS).

Its subcellular location is the cell inner membrane. It carries out the reaction phosphate(out) + ATP + H2O = ADP + 2 phosphate(in) + H(+). In terms of biological role, part of the ABC transporter complex PstSACB involved in phosphate import. Responsible for energy coupling to the transport system. The sequence is that of Phosphate import ATP-binding protein PstB from Pseudomonas fluorescens (strain ATCC BAA-477 / NRRL B-23932 / Pf-5).